The following is a 308-amino-acid chain: 2-methylisocitrate lyase (308 aa).

54–56 (SGG) lines the substrate pocket. Residues Asp94 and Asp96 each coordinate Mg(2+). Substrate-binding positions include 131-132 (CG), Arg166, Glu196, 224-226 (NIT), Arg255, and Arg284.

Belongs to the isocitrate lyase/PEP mutase superfamily. Methylisocitrate lyase family. In terms of assembly, homotetramer; dimer of dimers. Mg(2+) is required as a cofactor.

It carries out the reaction (2S,3R)-3-hydroxybutane-1,2,3-tricarboxylate = pyruvate + succinate. It functions in the pathway organic acid metabolism; propanoate degradation. In terms of biological role, involved in the catabolism of short chain fatty acids (SCFA) via the 2-methylcitrate cycle I (propionate degradation route). Catalyzes the thermodynamically favored C-C bond cleavage reaction of (2R,3S)-2-methylisocitrate to yield pyruvate and succinate via an alpha-carboxy-carbanion intermediate. The polypeptide is 2-methylisocitrate lyase (Vibrio cholerae serotype O1 (strain ATCC 39315 / El Tor Inaba N16961)).